Reading from the N-terminus, the 163-residue chain is Myosin light chain 2 (163 aa).

EF-hand domains are found at residues 15–50 (DYINKLKDAFQMLDEDEDGLISRGDLTKIYATLGKT) and 92–127 (PEREELEESLKAIGRGHDLNVPLNEVIDSLKEAGFE). The Ca(2+) site is built by Asp-28, Asp-30, Asp-32, and Asp-39.

In terms of assembly, interacts with the IQ domain of MYO1.

It is found in the bud neck. Regulatory light chain for the class II conventional myosin MYO1. May play a role in the disassembly of the MYO1 ring at the bud neck at the end of its contraction during cytokinesis. The sequence is that of Myosin light chain 2 (MLC2) from Saccharomyces cerevisiae (strain ATCC 204508 / S288c) (Baker's yeast).